The sequence spans 243 residues: Triosephosphate isomerase (243 aa).

9-11 (NWK) is a substrate binding site. Catalysis depends on H98, which acts as the Electrophile. The Proton acceptor role is filled by E167. Substrate-binding positions include G173, S205, and 226-227 (GG).

Belongs to the triosephosphate isomerase family. As to quaternary structure, homodimer.

It localises to the cytoplasm. It catalyses the reaction D-glyceraldehyde 3-phosphate = dihydroxyacetone phosphate. It participates in carbohydrate biosynthesis; gluconeogenesis. Its pathway is carbohydrate degradation; glycolysis; D-glyceraldehyde 3-phosphate from glycerone phosphate: step 1/1. Its function is as follows. Involved in the gluconeogenesis. Catalyzes stereospecifically the conversion of dihydroxyacetone phosphate (DHAP) to D-glyceraldehyde-3-phosphate (G3P). This is Triosephosphate isomerase from Mesomycoplasma hyorhinis (Mycoplasma hyorhinis).